Here is a 348-residue protein sequence, read N- to C-terminus: Dihydroorotase (348 aa).

2 residues coordinate Zn(2+): H14 and H16. Residues 16–18 (HLR) and N42 each bind substrate. 3 residues coordinate Zn(2+): K100, H137, and H175. Residue K100 is modified to N6-carboxylysine. H137 is a binding site for substrate. Substrate is bound at residue L220. D248 provides a ligand contact to Zn(2+). Residue D248 is part of the active site. 2 residues coordinate substrate: H252 and A264.

The protein belongs to the metallo-dependent hydrolases superfamily. DHOase family. Class II DHOase subfamily. As to quaternary structure, homodimer. Zn(2+) is required as a cofactor.

The catalysed reaction is (S)-dihydroorotate + H2O = N-carbamoyl-L-aspartate + H(+). It functions in the pathway pyrimidine metabolism; UMP biosynthesis via de novo pathway; (S)-dihydroorotate from bicarbonate: step 3/3. Catalyzes the reversible cyclization of carbamoyl aspartate to dihydroorotate. This is Dihydroorotase from Pseudomonas paraeruginosa (strain DSM 24068 / PA7) (Pseudomonas aeruginosa (strain PA7)).